We begin with the raw amino-acid sequence, 722 residues long: Transmembrane channel-like protein 8 (722 aa).

Positions 1-21 (MFRQWSVQSGPAPRRPESQAA) are disordered. The Cytoplasmic portion of the chain corresponds to 1–118 (MFRQWSVQSG…GIQSYFTFLR (118 aa)). A phosphoserine mark is found at serine 6 and serine 18. A helical membrane pass occupies residues 119–139 (FLLLLNLLTMLLTACFVLLPL). The Lumenal segment spans residues 140 to 204 (VWLRPPELGP…AGPESSSEYS (65 aa)). Residue asparagine 184 is glycosylated (N-linked (GlcNAc...) asparagine). Residues 205 to 225 (IRLAYLLSPMVCLLLCFCGIL) traverse the membrane as a helical segment. The Cytoplasmic segment spans residues 226–307 (QRMAEGLPQQ…CRLLTYLRTN (82 aa)). The helical transmembrane segment at 308-328 (ILIVLLVVGAISAIFWATKYS) threads the bilayer. The Lumenal segment spans residues 329 to 375 (QDNKEESLFLVLQYLPPGVISLVNFLGPQLFTVLIQLENYPPGTEVN). The tract at residues 366–534 (ENYPPGTEVN…SPRRFRASSS (169 aa)) is TMC domain. Asparagine 375 is a glycosylation site (N-linked (GlcNAc...) asparagine). The helical transmembrane segment at 376 to 396 (LTLIWCVVLKLASLGMFSFSL) threads the bilayer. The Cytoplasmic segment spans residues 397–430 (GQTVLCIGRNKTSCESYGYNACDYQCWENSVGEE). A helical transmembrane segment spans residues 431–451 (LYKLIIFNFLLTVAFAFLVSL). At 452-492 (PRRLLVERFSGWFWTWLDREEFLVPKNVLDIVAAQTVTWMG) the chain is on the lumenal side. A helical membrane pass occupies residues 493–513 (LFYCPLLPLLNSVFLFLTFYI). Over 514–536 (KKYTLLRNSRASPRRFRASSSTF) the chain is Cytoplasmic. Residues 537 to 557 (FFHLVLLLGLLLAAVPLAYVI) form a helical membrane-spanning segment. Residues 558–598 (SSTHSSWDCGLFTNYSAPWQVVPELVALQLPLPSQRALRYL) are Lumenal-facing. The N-linked (GlcNAc...) asparagine glycan is linked to asparagine 571. A helical transmembrane segment spans residues 599–619 (SSHAFSFPLLILLSIVLTVCI). At 620-722 (SQSRANARAI…RFHFPSRTEL (103 aa)) the chain is on the cytoplasmic side. Residues serine 658, serine 663, and serine 673 each carry the phosphoserine modification. Residues 658–722 (SPEPGSPHSR…RFHFPSRTEL (65 aa)) form a disordered region. Residues 678–687 (FPCPGSPGPR) are compositionally biased toward pro residues. Low complexity predominate over residues 689-712 (PRLAPSNRLSSSSLGAPSASVPAS). Serine 698 bears the Phosphoserine mark.

This sequence belongs to the TMC family. As to quaternary structure, interacts with TMC6. Interacts and forms a complex with TMC6 and CIB1; the interaction stabilizes each component of the complex. Interacts and forms a complex with TMC6 and SLC30A1/ZNT1; the interaction regulates zinc transport into the ER. Interacts with TRADD; the interaction competes with TRADD/RIPK1/TRAF2/cIAPs complex I formation and facilites complex II formation. In terms of tissue distribution, expressed in thymus, lung, prostate, placenta, testis and spleen. Expressed in lymphocytes and peripheral lymphocytes.

It is found in the endoplasmic reticulum membrane. It localises to the golgi apparatus membrane. Its subcellular location is the nucleus membrane. In terms of biological role, acts as a regulatory protein involved in the regulation of numerous cellular processes. Together with its homolog TMC6/EVER1, forms a complex with calcium-binding protein CIB1 in lymphocytes and keratynocytes where TMC6 and TMC8 stabilize CIB1 levels and reciprocally. Together with TMC6, also forms a complex with and activates zinc transporter ZNT1 at the ER membrane of keratynocytes, thereby facilitating zinc uptake into the ER. Also inhibits receptor-mediated calcium release from ER stores and calcium activated and volume regulated chloride channels. Down-regulates the activity of transcription factors induced by zinc and cytokines. Also sequesters TRADD which impairs the recruitment of TRAF2 and RIPK1 in the pro-survival complex I and promotes proapoptotic complex II formation, and may therefore be involved in TNF-induced cell death/survival decisions. This chain is Transmembrane channel-like protein 8, found in Mus musculus (Mouse).